A 593-amino-acid polypeptide reads, in one-letter code: ESX-1 secretion system protein EccCb1 (593 aa).

2 consecutive FtsK domains span residues 66-260 (RQEV…NETQ) and 350-546 (QVPL…EKND). Residues 85 to 92 (GAPQTGKS) and 377 to 384 (GAPKSGKT) contribute to the ATP site.

As to quaternary structure, part of the ESX-1 / type VII secretion system (T7SS), which is composed of cytosolic and membrane components. The ESX-1 membrane complex is composed of EccB1, EccCa1, EccCb1, EccD1 and EccE1.

It localises to the cytoplasm. Its function is as follows. Part of the ESX-1 / type VII specialized secretion system (T7SS), which exports several proteins including EsxA and EsxB. Plays a role in DNA conjugation, in both donor and recipient strains. The protein is ESX-1 secretion system protein EccCb1 of Mycolicibacterium smegmatis (strain ATCC 700084 / mc(2)155) (Mycobacterium smegmatis).